The primary structure comprises 120 residues: Small ribosomal subunit protein uS13 (120 aa).

The tract at residues 93-120 (RRGLPCRGQKTKTNARTRKGKRKTVGAA) is disordered.

This sequence belongs to the universal ribosomal protein uS13 family. In terms of assembly, part of the 30S ribosomal subunit. Forms a loose heterodimer with protein S19. Forms two bridges to the 50S subunit in the 70S ribosome.

Its function is as follows. Located at the top of the head of the 30S subunit, it contacts several helices of the 16S rRNA. In the 70S ribosome it contacts the 23S rRNA (bridge B1a) and protein L5 of the 50S subunit (bridge B1b), connecting the 2 subunits; these bridges are implicated in subunit movement. Contacts the tRNAs in the A and P-sites. The chain is Small ribosomal subunit protein uS13 from Sulfurovum sp. (strain NBC37-1).